Reading from the N-terminus, the 457-residue chain is Endo-1,3(4)-beta-glucanase ARB_04519 (457 aa).

An N-terminal signal peptide occupies residues 1–18; sequence MRTTGLLLLGALAELGSA. The region spanning 19–319 is the GH16 domain; it reads TYILEDDYQP…YMKVYQQGTA (301 aa). E130 serves as the catalytic Nucleophile. The Proton donor role is filled by E135. N-linked (GlcNAc...) asparagine glycosylation is present at N200. The tract at residues 318-397 is disordered; it reads TAPTKPSQAP…DSCPPPTQPA (80 aa). The span at 333–352 shows a compositional bias: low complexity; the sequence is TPALPTMKSTSTVSSMVSAT. The segment covering 353–362 has biased composition (polar residues); it reads QPAPTASNPT. A compositionally biased stretch (low complexity) spans 368–378; that stretch reads PSSSSSNNGPQ.

This sequence belongs to the glycosyl hydrolase 16 family.

It localises to the secreted. It carries out the reaction Endohydrolysis of (1-&gt;3)- or (1-&gt;4)-linkages in beta-D-glucans when the glucose residue whose reducing group is involved in the linkage to be hydrolyzed is itself substituted at C-3.. Mixed-linked glucanase involved in the degradation of complex natural cellulosic substrates. Active on laminarin. lichenan, soluble carboxymethyl cellulose but not on pustulan. This chain is Endo-1,3(4)-beta-glucanase ARB_04519, found in Arthroderma benhamiae (strain ATCC MYA-4681 / CBS 112371) (Trichophyton mentagrophytes).